The primary structure comprises 334 residues: B3 domain-containing protein LOC_Os12g40090 (334 aa).

The segment at residues 5 to 102 (RIRFFRLMTG…SFDVLIFDAS (98 aa)) is a DNA-binding region (TF-B3 1). The tract at residues 142 to 178 (TSTPSVLIGSPHKASTSKKLSGKTKTNPRKEPEDPNC) is disordered. Low complexity predominate over residues 154–166 (KASTSKKLSGKTK). The TF-B3 2 DNA-binding region spans 227 to 326 (FVVVLQTAHV…TMTVHVIGKA (100 aa)).

Its subcellular location is the nucleus. In Oryza sativa subsp. japonica (Rice), this protein is B3 domain-containing protein LOC_Os12g40090.